A 366-amino-acid chain; its full sequence is UPF0329 protein ECU01_0130/ECU01_1480/ECU08_0060 (366 aa).

The disordered stretch occupies residues 325–366 (IRKEEKRIRKEEERAKNEEELLRMVESEEGKSGEGEEGCRRG).

This sequence belongs to the UPF0329 family.

The chain is UPF0329 protein ECU01_0130/ECU01_1480/ECU08_0060 from Encephalitozoon cuniculi (strain GB-M1) (Microsporidian parasite).